The sequence spans 121 residues: Pro-glucagon (121 aa).

The first 21 residues, 1-21 (MKGAQYLAGLLLLLFVQNSIC), serve as a signal peptide directing secretion. Residues 80 to 85 (SNGGSA) constitute a propeptide that is removed on maturation.

This sequence belongs to the glucagon family.

The protein localises to the secreted. In terms of biological role, plays a key role in glucose metabolism and homeostasis. Regulates blood glucose by increasing gluconeogenesis and decreasing glycolysis. This is Pro-glucagon (gcg) from Carassius auratus (Goldfish).